The following is a 329-amino-acid chain: Protein mlo2 (329 aa).

Residues 33-104 (DTCTYSMGYL…HSIPCNLRKS (72 aa)) form a UBR-type zinc finger. The PHD-type zinc-finger motif lies at 120–179 (GRFCICDTVYNPETEEGTMFQCILCEDWFHEKCLQKTNKGIAIPDAETFEWLVCSECSEK).

It belongs to the UBR7 family.

In terms of biological role, not known, interfere with mitotic chromosome segregation when overexpressed. This is Protein mlo2 (mlo2) from Schizosaccharomyces pombe (strain 972 / ATCC 24843) (Fission yeast).